The following is a 458-amino-acid chain: Adenylosuccinate synthetase (458 aa).

GTP is bound by residues 17-23 and 45-47; these read GDEGKGK and GHT. D18 acts as the Proton acceptor in catalysis. 2 residues coordinate Mg(2+): D18 and G45. IMP contacts are provided by residues 18–21, 43–46, T137, R151, Q247, T262, and R330; these read DEGK and NAGH. Catalysis depends on H46, which acts as the Proton donor. 326 to 332 is a substrate binding site; sequence VTTGRSR. GTP-binding positions include R332, 358–360, and 440–442; these read KLD and STS.

It belongs to the adenylosuccinate synthetase family. Homodimer. Requires Mg(2+) as cofactor.

It localises to the cytoplasm. The enzyme catalyses IMP + L-aspartate + GTP = N(6)-(1,2-dicarboxyethyl)-AMP + GDP + phosphate + 2 H(+). Its pathway is purine metabolism; AMP biosynthesis via de novo pathway; AMP from IMP: step 1/2. Functionally, plays an important role in the de novo pathway of purine nucleotide biosynthesis. Catalyzes the first committed step in the biosynthesis of AMP from IMP. The polypeptide is Adenylosuccinate synthetase (Acidovorax ebreus (strain TPSY) (Diaphorobacter sp. (strain TPSY))).